Here is a 578-residue protein sequence, read N- to C-terminus: Proline--tRNA ligase (578 aa).

This sequence belongs to the class-II aminoacyl-tRNA synthetase family. ProS type 1 subfamily. As to quaternary structure, homodimer.

Its subcellular location is the cytoplasm. It catalyses the reaction tRNA(Pro) + L-proline + ATP = L-prolyl-tRNA(Pro) + AMP + diphosphate. In terms of biological role, catalyzes the attachment of proline to tRNA(Pro) in a two-step reaction: proline is first activated by ATP to form Pro-AMP and then transferred to the acceptor end of tRNA(Pro). As ProRS can inadvertently accommodate and process non-cognate amino acids such as alanine and cysteine, to avoid such errors it has two additional distinct editing activities against alanine. One activity is designated as 'pretransfer' editing and involves the tRNA(Pro)-independent hydrolysis of activated Ala-AMP. The other activity is designated 'posttransfer' editing and involves deacylation of mischarged Ala-tRNA(Pro). The misacylated Cys-tRNA(Pro) is not edited by ProRS. The chain is Proline--tRNA ligase from Burkholderia ambifaria (strain ATCC BAA-244 / DSM 16087 / CCUG 44356 / LMG 19182 / AMMD) (Burkholderia cepacia (strain AMMD)).